Reading from the N-terminus, the 397-residue chain is MSLWKKTLYKSVCLALALLVAVTVFQRSVTPGQFLQDPLPPTLGPPKTGSLVNPNSFWKSSKDVVAPTPTVPRGPQVWDVVTTNCSINVNLTHQPWFQNLEPHFRQFLAYQHCRYFPMLLNHPEKCAGDVYLLVVVKSVITQHDRREVIRQTWGHEWESAGPDRGAVRTLFLLGTASKQEERTHYQQLLAYEDRLYGDILQWDFLDSFFNLTLKEIHFLKWLDIYCPNVPFIFKGDDDVFVNPTNLLEFLSDRQPQENLFVGDVLKHARPIRKKDNKYYIPAVMYSKATYPPYAGGGGFLMSGSLARQLHHACDTLELFPIDDVFLGMCLEVLGVKPTGHEGFKTFGISRVRGSRMNKEPCFYRSMLVVHKLLPAELLAMWDLVHSNLTCSLKFQVL.

Topologically, residues 1-6 (MSLWKK) are cytoplasmic. Residues 7–26 (TLYKSVCLALALLVAVTVFQ) form a helical; Signal-anchor for type II membrane protein membrane-spanning segment. Topologically, residues 27 to 397 (RSVTPGQFLQ…LTCSLKFQVL (371 aa)) are lumenal. N84, N90, N210, and N387 each carry an N-linked (GlcNAc...) asparagine glycan.

This sequence belongs to the glycosyltransferase 31 family.

The protein localises to the golgi apparatus membrane. The protein operates within protein modification; protein glycosylation. In terms of biological role, N-acetyl glucosamine (GlcNAc) transferase that catalyzes the transfer of GlcNAc via a beta1-&gt;3 linkage from UDP-GlcNAc to the non-reducing terminal galactose (Gal) in the linearly growing chain of N- and O-linked keratan sulfate proteoglycans. Cooperates with B4GALT4 galactosyltransferase and CHST6 and CHST1 sulfotransferases to construct and elongate mono- and disulfated disaccharide units [-&gt;3Galbeta1-&gt;4(6-sulfoGlcNAcbeta)1-&gt;] and [-&gt;3(6-sulfoGalbeta)1-&gt;4(6-sulfoGlcNAcbeta)1-&gt;] within keratan sulfate polymer. Involved in biosynthesis of N-linked keratan sulfate proteoglycans in cornea, with an impact on proteoglycan fibril organization and corneal transparency. May play a role in the maintenance of tissue architecture by suppressing cellular motility and invasion. This is UDP-GlcNAc:betaGal beta-1,3-N-acetylglucosaminyltransferase 7 (B3gnt7) from Rattus norvegicus (Rat).